A 247-amino-acid chain; its full sequence is Homeobox-leucine zipper protein HOX17 (247 aa).

Residues 58–81 form a disordered region; the sequence is ERAGLRGGGGSDEEDGGCGIDGSR. The homeobox DNA-binding region spans 79–138; the sequence is GSRKKLRLSKDQSAVLEDSFREHPTLNPRQKATLAQQLGLRPRQVEVWFQNRRARTKLKQ. Positions 137-182 are leucine-zipper; the sequence is KQTEVDCEFLKRCCETLTEENRRLQKEVQELRALKLVSPHLYMNMS.

This sequence belongs to the HD-ZIP homeobox family. Class II subfamily. In terms of tissue distribution, expressed in seedlings, roots, stems, leaf sheaths and blades and panicles.

The protein localises to the nucleus. Probable transcription factor. This Oryza sativa subsp. indica (Rice) protein is Homeobox-leucine zipper protein HOX17 (HOX17).